The sequence spans 198 residues: NADH-quinone oxidoreductase subunit C (198 aa).

It belongs to the complex I 30 kDa subunit family. In terms of assembly, NDH-1 is composed of 14 different subunits. Subunits NuoB, C, D, E, F, and G constitute the peripheral sector of the complex.

Its subcellular location is the cell inner membrane. It catalyses the reaction a quinone + NADH + 5 H(+)(in) = a quinol + NAD(+) + 4 H(+)(out). Functionally, NDH-1 shuttles electrons from NADH, via FMN and iron-sulfur (Fe-S) centers, to quinones in the respiratory chain. The immediate electron acceptor for the enzyme in this species is believed to be ubiquinone. Couples the redox reaction to proton translocation (for every two electrons transferred, four hydrogen ions are translocated across the cytoplasmic membrane), and thus conserves the redox energy in a proton gradient. In Herminiimonas arsenicoxydans, this protein is NADH-quinone oxidoreductase subunit C.